Reading from the N-terminus, the 258-residue chain is Global transcriptional regulator CodY (258 aa).

A GAF domain region spans residues Met-1 to Leu-156. A DNA-binding region (H-T-H motif) is located at residues Ala-204–Arg-223.

This sequence belongs to the CodY family.

The protein localises to the cytoplasm. In terms of biological role, DNA-binding global transcriptional regulator which is involved in the adaptive response to starvation and acts by directly or indirectly controlling the expression of numerous genes in response to nutrient availability. During rapid exponential growth, CodY is highly active and represses genes whose products allow adaptation to nutrient depletion. This is Global transcriptional regulator CodY from Clostridium perfringens (strain SM101 / Type A).